Here is a 93-residue protein sequence, read N- to C-terminus: Cobalt transport protein CbiN (93 aa).

2 consecutive transmembrane segments (helical) span residues 5-25 and 63-83; these read LMLL…NHGG and LLFT…LGYC.

This sequence belongs to the CbiN family. In terms of assembly, forms an energy-coupling factor (ECF) transporter complex composed of an ATP-binding protein (A component, CbiO), a transmembrane protein (T component, CbiQ) and 2 possible substrate-capture proteins (S components, CbiM and CbiN) of unknown stoichimetry.

It localises to the cell inner membrane. The protein operates within cofactor biosynthesis; adenosylcobalamin biosynthesis. In terms of biological role, part of the energy-coupling factor (ECF) transporter complex CbiMNOQ involved in cobalt import. The protein is Cobalt transport protein CbiN of Salmonella newport (strain SL254).